We begin with the raw amino-acid sequence, 173 residues long: Crossover junction endodeoxyribonuclease RuvC (173 aa).

Catalysis depends on residues Asp-8, Glu-67, and Asp-139. Mg(2+) is bound by residues Asp-8, Glu-67, and Asp-139.

It belongs to the RuvC family. In terms of assembly, homodimer which binds Holliday junction (HJ) DNA. The HJ becomes 2-fold symmetrical on binding to RuvC with unstacked arms; it has a different conformation from HJ DNA in complex with RuvA. In the full resolvosome a probable DNA-RuvA(4)-RuvB(12)-RuvC(2) complex forms which resolves the HJ. Mg(2+) is required as a cofactor.

It is found in the cytoplasm. The enzyme catalyses Endonucleolytic cleavage at a junction such as a reciprocal single-stranded crossover between two homologous DNA duplexes (Holliday junction).. In terms of biological role, the RuvA-RuvB-RuvC complex processes Holliday junction (HJ) DNA during genetic recombination and DNA repair. Endonuclease that resolves HJ intermediates. Cleaves cruciform DNA by making single-stranded nicks across the HJ at symmetrical positions within the homologous arms, yielding a 5'-phosphate and a 3'-hydroxyl group; requires a central core of homology in the junction. The consensus cleavage sequence is 5'-(A/T)TT(C/G)-3'. Cleavage occurs on the 3'-side of the TT dinucleotide at the point of strand exchange. HJ branch migration catalyzed by RuvA-RuvB allows RuvC to scan DNA until it finds its consensus sequence, where it cleaves and resolves the cruciform DNA. Plays a role in recovery after DNA ADP-ribosylation, probably via replication fork reversal. The protein is Crossover junction endodeoxyribonuclease RuvC of Escherichia coli O127:H6 (strain E2348/69 / EPEC).